We begin with the raw amino-acid sequence, 1025 residues long: MSNKKQKEEINTAGGSVILKTMVRDKDKEQKEEKREKKEKKRLEKKEAENVKKEKKKEKKELKKIGKAGRSGSITSDSSTHSGAQEFDSYGNDSNGGGGGLSASIDSNGLSSSGQPMQTRHLEKEVGEKQGIYSLSSQDRSSSLPHSSQDDQAKPLITESEIFSSESFLIAVSDTDHLGPAIKSVFENNKEKEVIKILNAYIAQKDLDIEKICGENHEGFINSVTAFLGLKGENLDLKQDVINLNYELQEIGRKYVTKAEELFAYKQIKDNIKRTKEVLNNCQYAILLGMKVDEYVQQKKYYQAIKNMDQLHNVYLKKLSDFQFARNMDYNIPVLKEKIKKLVKDEFNQWMVEIKEKSAVIGKLGMIQTSKKLLKEREINPLKIKTTFGENEQIWDKILDIPPIINSSSIGSLALYPTLNSPVTAPIYSPNSGKTPSSFGFNKQINEKDLKEDINQFSPFDESDIQFHPLYQCLFIHASIGQLEEFQAYYTLNRLLQFQLVIQPKESGQVWELFLQQILGYFMVESKVIDSTEPFLSKTTINDSWNSALVKVTSVLQELFTHCVDTQPLIAFKKFVLIFTNTMSFYSYHVQPLYYFLDTMKEKYCQFSIKEAVERFTIILERDSHCSLIIESLEEYKSLILANKLDILERQQLRQLQNSLNNNQFQFGDKNLNNNNNNDDDDDYFDEDENEDDKISKRLPKSFLFSKMVPQFYTLIKKFISEFYEFSDQLTENENFIIRSTDTLIKKINEVLYSYLTQSQAVPQVIQLVINLQHLISGCSFFKDYLNSLILGEDYQKNQSIVNETNKVILNSQNLLYTTKSHGEKLIIKLCEQKIEDLMSSAANIEWFPQNAIDDRPRDYIIDVCTFLEVTLPFISPLSQNLKEEFITKAFKNISESLFSLIYDDQLKKLNLQGVKSFDADLKYIETYVKEKANEKERTTTTSRNMVGYFVELRQLTNFLLSDNPEDFVDPKIKAKHYNLITNIPQLLNILNKYKEESKGFTTSKEIKDRNKKIADAIKKIKDSL.

Composition is skewed to basic and acidic residues over residues 1 to 10 (MSNKKQKEEI) and 22 to 52 (MVRD…ENVK). Disordered stretches follow at residues 1–122 (MSNK…TRHL), 135–154 (LSSQ…DQAK), and 666–691 (QFGD…DENE). Residues 19 to 68 (LKTMVRDKDKEQKEEKREKKEKKRLEKKEAENVKKEKKKEKKELKKIGKA) adopt a coiled-coil conformation. Residues 71 to 93 (SGSITSDSSTHSGAQEFDSYGND) are compositionally biased toward low complexity. A compositionally biased stretch (polar residues) spans 104–118 (SIDSNGLSSSGQPMQ). Composition is skewed to low complexity over residues 135 to 147 (LSSQ…LPHS) and 666 to 677 (QFGDKNLNNNNN). Residues 678-691 (NDDDDDYFDEDENE) are compositionally biased toward acidic residues.

The protein belongs to the SEC15 family. The exocyst complex is composed of sec3/exoc1, sec5/exoc2, sec6/exoc3, sec8/exoc4, sec10/exoc5, sec15/exoc6, exo70/exoc7 and exo84/exoc8.

It is found in the cytoplasm. The protein localises to the perinuclear region. The protein resides in the midbody. Its subcellular location is the midbody ring. Its function is as follows. Component of the exocyst complex involved in the docking of exocytic vesicles with fusion sites on the plasma membrane. This Dictyostelium discoideum (Social amoeba) protein is Exocyst complex component 6 (exoc6).